A 453-amino-acid chain; its full sequence is UDP-glycosyltransferase 76E9 (453 aa).

UDP-alpha-D-glucose contacts are provided by residues Ser-279, 337–339 (APQ), 354–362 (HCGWNSTLE), and 376–379 (TTDQ).

This sequence belongs to the UDP-glycosyltransferase family.

In Arabidopsis thaliana (Mouse-ear cress), this protein is UDP-glycosyltransferase 76E9 (UGT76E9).